We begin with the raw amino-acid sequence, 527 residues long: Oviduct-specific glycoprotein (527 aa).

An N-terminal signal peptide occupies residues 1 to 21 (MGKLLLWVGLVLVLKHHNGAA). The GH18 domain maps to 22–385 (HKLVCYFANW…YMLNDLLLKA (364 aa)). Cys-26 and Cys-51 form a disulfide bridge. An N-linked (GlcNAc...) asparagine glycan is attached at Asn-62. Chitin is bound by residues 71–72 (AR), 98–101 (GGWN), Tyr-142, 211–214 (LSYD), and Trp-355. Asn-402 and Asn-441 each carry an N-linked (GlcNAc...) asparagine glycan. The interval 433-527 (TETHGRSDNM…MTLPSGKRSD (95 aa)) is disordered.

Belongs to the glycosyl hydrolase 18 family. In terms of tissue distribution, oviduct.

It localises to the cytoplasmic vesicle. The protein resides in the secretory vesicle. Binds to oocyte zona pellucida in vivo. May play a role in the fertilization process and/or early embryonic development. This chain is Oviduct-specific glycoprotein (OVGP1), found in Sus scrofa (Pig).